The following is a 292-amino-acid chain: MTSTFQTIGIVGHPRHPNALATHETLYHWLNEKGYHVIMEHQIARYLALHEAITGSLADIGQQADLAIVIGGDGNMLGAARILARYDIKVIGINRGNLGFLTDLDPDSALAQLSDVLAGHFRSEKRFLLEAQVCRGDVCGRLSSSINEVVLHPGKVAHMIEFEVYIDDTFAFSQRSDGLIIATPTGSTAYSLSAGGPILTPLVDAIALVPMFPHTLSSRPLVINGGSTIRLKFSQLTPDLEISCDSQIALPIQDGEEIFIRRSDYYLDLIHPNDYNYFNTLSSKLGWSKKLF.

D73 serves as the catalytic Proton acceptor. NAD(+) is bound by residues 73 to 74 (DG), 147 to 148 (NE), H158, R175, D177, 188 to 193 (TAYSLS), and Q247.

It belongs to the NAD kinase family. A divalent metal cation is required as a cofactor.

The protein localises to the cytoplasm. The catalysed reaction is NAD(+) + ATP = ADP + NADP(+) + H(+). In terms of biological role, involved in the regulation of the intracellular balance of NAD and NADP, and is a key enzyme in the biosynthesis of NADP. Catalyzes specifically the phosphorylation on 2'-hydroxyl of the adenosine moiety of NAD to yield NADP. The polypeptide is NAD kinase (Sodalis glossinidius (strain morsitans)).